A 335-amino-acid polypeptide reads, in one-letter code: Transcriptional coactivator YAP1-B (335 aa).

Residues 1-13 (MEPGSQQQPSAPG) show a composition bias toward low complexity. The disordered stretch occupies residues 1-21 (MEPGSQQQPSAPGQQPPPVGH). Ser30 is subject to Phosphoserine; by LATS1 and LATS2. A compositionally biased stretch (polar residues) spans 114–124 (MNQQRLSQSAP). Positions 114–146 (MNQQRLSQSAPVKSPPALQPQSPPSGVLGSGGN) are disordered. Residues 126–136 (KSPPALQPQSP) show a composition bias toward pro residues. Residues 137–335 (PSGVLGSGGN…LDKESFLTWL (199 aa)) are transactivation domain. Positions 145–173 (GNQQMRLQQLQMEKERLRLKHQELLRQVR) form a coiled coil.

Belongs to the YAP1 family. Post-translationally, phosphorylated by lats1 and lats2; leading to cytoplasmic translocation and inactivation.

Its subcellular location is the cytoplasm. The protein resides in the nucleus. The protein localises to the cell junction. It is found in the tight junction. It localises to the cell membrane. In terms of biological role, transcriptional regulator which can act both as a coactivator and a corepressor and is the critical downstream regulatory target in the Hippo signaling pathway that plays a pivotal role in organ size control and tumor suppression by restricting proliferation and promoting apoptosis. Plays a key role in tissue tension and 3D tissue shape by regulating cortical actomyosin network formation. This is Transcriptional coactivator YAP1-B from Xenopus laevis (African clawed frog).